The following is a 434-amino-acid chain: ATP-dependent protease ATPase subunit HslU (434 aa).

ATP contacts are provided by residues Ile-18, 60 to 65 (GVGKTE), Asp-247, Glu-312, and Arg-384.

It belongs to the ClpX chaperone family. HslU subfamily. A double ring-shaped homohexamer of HslV is capped on each side by a ring-shaped HslU homohexamer. The assembly of the HslU/HslV complex is dependent on binding of ATP.

The protein localises to the cytoplasm. Functionally, ATPase subunit of a proteasome-like degradation complex; this subunit has chaperone activity. The binding of ATP and its subsequent hydrolysis by HslU are essential for unfolding of protein substrates subsequently hydrolyzed by HslV. HslU recognizes the N-terminal part of its protein substrates and unfolds these before they are guided to HslV for hydrolysis. This Brucella abortus (strain S19) protein is ATP-dependent protease ATPase subunit HslU.